Reading from the N-terminus, the 151-residue chain is Guanylate kinase homolog (151 aa).

The Guanylate kinase-like domain maps to 1–141 (MEREGVDYHY…AYSKLIQILQ (141 aa)).

It belongs to the guanylate kinase family.

The chain is Guanylate kinase homolog from Bos taurus (Bovine).